A 293-amino-acid chain; its full sequence is Protease HtpX homolog (293 aa).

2 helical membrane passes run 4 to 24 and 38 to 58; these read IFLF…TMRI and LTGL…ISLL. His-146 contributes to the Zn(2+) binding site. Residue Glu-147 is part of the active site. His-150 serves as a coordination point for Zn(2+). 2 consecutive transmembrane segments (helical) span residues 161-181 and 198-218; these read LIQG…GYFV and ATVI…VAWF. A Zn(2+)-binding site is contributed by Glu-223.

It belongs to the peptidase M48B family. Requires Zn(2+) as cofactor.

The protein localises to the cell inner membrane. This is Protease HtpX homolog from Bordetella parapertussis (strain 12822 / ATCC BAA-587 / NCTC 13253).